We begin with the raw amino-acid sequence, 526 residues long: UDP-glycosyltransferase UGT5 (526 aa).

At 1 to 474 the chain is on the lumenal side; that stretch reads MIFFYFLTLT…TAAVDMPWYQ (474 aa). Residues Asn49, Asn124, and Asn283 are each glycosylated (N-linked (GlcNAc...) asparagine). Residues 475–495 traverse the membrane as a helical segment; it reads YLLLDVIAFLIFILVSVILII. The Cytoplasmic segment spans residues 496–526; sequence YYGVKISLRYLCALIFGNSSSLKPTKKVKDN.

This sequence belongs to the UDP-glycosyltransferase family.

It localises to the microsome membrane. In terms of biological role, catalyzes the transfer of a glycosyl group from a UDP-sugar to an acceptor molecule. The sequence is that of UDP-glycosyltransferase UGT5 from Dactylopius coccus (Cochineal).